The primary structure comprises 552 residues: CTP synthase (552 aa).

The amidoligase domain stretch occupies residues 1–270; it reads MTKFVFVTGG…DGLICDKLRL (270 aa). Residue S13 participates in CTP binding. S13 is a binding site for UTP. Residues 14–19 and D71 each bind ATP; that span reads SLGKGI. Residues D71 and E144 each contribute to the Mg(2+) site. Residues 151–153, 191–196, and K227 contribute to the CTP site; these read DIE and KTKPTQ. UTP contacts are provided by residues 191 to 196 and K227; that span reads KTKPTQ. The Glutamine amidotransferase type-1 domain occupies 295–548; it reads KIAMVGKYVE…VKAAIERQKA (254 aa). G357 provides a ligand contact to L-glutamine. C384 (nucleophile; for glutamine hydrolysis) is an active-site residue. L-glutamine contacts are provided by residues 385-388, E408, and R474; that span reads LGMQ. Residues H521 and E523 contribute to the active site.

This sequence belongs to the CTP synthase family. Homotetramer.

It catalyses the reaction UTP + L-glutamine + ATP + H2O = CTP + L-glutamate + ADP + phosphate + 2 H(+). The enzyme catalyses L-glutamine + H2O = L-glutamate + NH4(+). It carries out the reaction UTP + NH4(+) + ATP = CTP + ADP + phosphate + 2 H(+). Its pathway is pyrimidine metabolism; CTP biosynthesis via de novo pathway; CTP from UDP: step 2/2. Its activity is regulated as follows. Allosterically activated by GTP, when glutamine is the substrate; GTP has no effect on the reaction when ammonia is the substrate. The allosteric effector GTP functions by stabilizing the protein conformation that binds the tetrahedral intermediate(s) formed during glutamine hydrolysis. Inhibited by the product CTP, via allosteric rather than competitive inhibition. Functionally, catalyzes the ATP-dependent amination of UTP to CTP with either L-glutamine or ammonia as the source of nitrogen. Regulates intracellular CTP levels through interactions with the four ribonucleotide triphosphates. The chain is CTP synthase from Delftia acidovorans (strain DSM 14801 / SPH-1).